The chain runs to 243 residues: Bidirectional sugar transporter SWEET2a (243 aa).

The Extracellular segment spans residues 1–23; sequence MDWAAPALTSFVADSSYRHLCCY. A helical membrane pass occupies residues 24–44; the sequence is GAGIAGNVFAFVLFISPLPTF. The MtN3/slv 1 domain occupies 24–111; the sequence is GAGIAGNVFA…AVFIAFADAK (88 aa). Over 45 to 57 the chain is Cytoplasmic; that stretch reads KRIVRNGSTEQFS. A helical membrane pass occupies residues 58–80; the sequence is AMPYIYSLLNCLICMWYGLPFVS. Residues 81–89 lie on the Extracellular side of the membrane; that stretch reads YGVVLVATV. A helical transmembrane segment spans residues 90–110; it reads NSIGAVFQLAYTAVFIAFADA. Residues 111 to 117 are Cytoplasmic-facing; sequence KQRLKVS. Residues 118 to 138 form a helical membrane-spanning segment; that stretch reads ALLAAVFVVFGLIVFVSLALL. The Extracellular portion of the chain corresponds to 139–145; the sequence is DHPTRQM. Residues 146–166 traverse the membrane as a helical segment; it reads FVGYLSVASLIFMFASPLSII. The MtN3/slv 2 domain occupies 147–230; it reads VGYLSVASLI…VLYAYFRKGS (84 aa). Residues 167 to 179 are Cytoplasmic-facing; the sequence is NLVIRTKSVEYMP. The chain crosses the membrane as a helical span at residues 180–200; it reads FYLSLSMFLMSASFFGYGVLL. At 201–202 the chain is on the extracellular side; it reads ND. A helical membrane pass occupies residues 203-223; the sequence is FFIYIPNGIGTILGIIQLVLY. At 224-243 the chain is on the cytoplasmic side; the sequence is AYFRKGSSEEAKLPLLVTHT.

Belongs to the SWEET sugar transporter family. Forms homooligomers and/or heterooligomers.

Its subcellular location is the cell membrane. In terms of biological role, mediates both low-affinity uptake and efflux of sugar across the plasma membrane. This chain is Bidirectional sugar transporter SWEET2a, found in Sorghum bicolor (Sorghum).